A 257-amino-acid chain; its full sequence is UPF0246 protein YaaA (257 aa).

The protein belongs to the UPF0246 family.

In Salmonella agona (strain SL483), this protein is UPF0246 protein YaaA.